The primary structure comprises 387 residues: Mitochondrial import inner membrane translocase subunit TIM50 (387 aa).

Residues Met1–Cys26 constitute a mitochondrion transit peptide. Residues Ser27–Lys100 lie on the Mitochondrial matrix side of the membrane. Residues Leu61 to Glu93 form a disordered region. Residues Asp77–Glu93 show a composition bias toward basic and acidic residues. Residues Met101 to Phe121 traverse the membrane as a helical segment. Residues Gly122–Gln387 lie on the Mitochondrial intermembrane side of the membrane. An FCP1 homology domain is found at Tyr178 to Ile321.

This sequence belongs to the TIM50 family. Component of the TIM23 complex at least composed of timm23, timm17 and timm50.

The protein localises to the mitochondrion inner membrane. Its function is as follows. Essential component of the TIM23 complex, a complex that mediates the translocation of transit peptide-containing proteins across the mitochondrial inner membrane. The protein is Mitochondrial import inner membrane translocase subunit TIM50 (timm50) of Danio rerio (Zebrafish).